The sequence spans 187 residues: Large ribosomal subunit protein bL17 (187 aa).

The segment at 122-187 (PKVRSSRTST…EADAAEKSDK (66 aa)) is disordered. Residues 127–144 (SRTSTATAPAAAAPAAEA) are compositionally biased toward low complexity. 2 stretches are compositionally biased toward acidic residues: residues 145-157 (PAEE…EETD) and 165-180 (TPAE…VEAD).

The protein belongs to the bacterial ribosomal protein bL17 family. Part of the 50S ribosomal subunit. Contacts protein L32.

In Clavibacter michiganensis subsp. michiganensis (strain NCPPB 382), this protein is Large ribosomal subunit protein bL17.